We begin with the raw amino-acid sequence, 295 residues long: Probable aspartoacylase (295 aa).

Zn(2+)-binding residues include His16 and Glu19. Substrate contacts are provided by residues Arg58 and 65–66 (NR). Zn(2+) is bound at residue His107. Residues Glu166 and Tyr277 each contribute to the substrate site.

It belongs to the AspA/AstE family. Aspartoacylase subfamily. Zn(2+) is required as a cofactor.

It catalyses the reaction an N-acyl-L-aspartate + H2O = a carboxylate + L-aspartate. This Acaryochloris marina (strain MBIC 11017) protein is Probable aspartoacylase.